We begin with the raw amino-acid sequence, 106 residues long: PTS system fructose-like EIIB component 2 (106 aa).

One can recognise a PTS EIIB type-2 domain in the interval 1-103 (MTKIIAVTAC…IMSKIEAHLA (103 aa)). The active-site Phosphocysteine intermediate is the cysteine 10. Cysteine 10 is subject to Phosphocysteine; by EIIA.

It is found in the cytoplasm. It carries out the reaction D-fructose(out) + N(pros)-phospho-L-histidyl-[protein] = D-fructose 1-phosphate(in) + L-histidyl-[protein]. Its function is as follows. The phosphoenolpyruvate-dependent sugar phosphotransferase system (sugar PTS), a major carbohydrate active transport system, catalyzes the phosphorylation of incoming sugar substrates concomitantly with their translocation across the cell membrane. The enzyme II FrwABC PTS system is involved in fructose transport. The chain is PTS system fructose-like EIIB component 2 (frwB) from Escherichia coli O157:H7.